A 389-amino-acid polypeptide reads, in one-letter code: Cytochrome b (389 aa).

4 helical membrane passes run 32–52 (FGSL…FLAM), 76–98 (YILR…VHIG), 113–133 (LWSI…LGYV), and 179–199 (FFSL…AHMI). Heme b-binding residues include H82 and H96. Positions 183 and 197 each coordinate heme b. H202 contributes to the a ubiquinone binding site. The next 4 helical transmembrane spans lie at 225 to 245 (FIFK…IIVF), 289 to 309 (LLGV…PFVD), 322 to 342 (INMV…LVGA), and 349 to 369 (FIFL…VIVP).

Belongs to the cytochrome b family. As to quaternary structure, fungal cytochrome b-c1 complex contains 10 subunits; 3 respiratory subunits, 2 core proteins and 5 low-molecular weight proteins. Cytochrome b-c1 complex is a homodimer. The cofactor is heme b.

It localises to the mitochondrion inner membrane. Component of the ubiquinol-cytochrome c reductase complex (complex III or cytochrome b-c1 complex) that is part of the mitochondrial respiratory chain. The b-c1 complex mediates electron transfer from ubiquinol to cytochrome c. Contributes to the generation of a proton gradient across the mitochondrial membrane that is then used for ATP synthesis. The chain is Cytochrome b (COB) from Mycena viridimarginata.